The sequence spans 193 residues: MQELEERIQSEGTVKAGNVLKVDAFLNHQCDVRLFDRMGSAWAAHFAGKHITKILTIEASGIGIACVAAQHFGNVPVVFAKKAQSINLDGDQYTTTVYSFTKQKEFPVIVAKKYLNAGDHVLLIDDFLANGKALRGLIDLCEAAGATVEGIGIAVEKGFQGGGDALRAEGYDVDSLAIVESMNPETGEITFRH.

Residues Leu-20 and Asn-27 each coordinate xanthine. Residue 129–133 (ANGKA) coordinates 5-phospho-alpha-D-ribose 1-diphosphate. Xanthine is bound at residue Lys-157.

It belongs to the purine/pyrimidine phosphoribosyltransferase family. Xpt subfamily. As to quaternary structure, homodimer.

The protein resides in the cytoplasm. It catalyses the reaction XMP + diphosphate = xanthine + 5-phospho-alpha-D-ribose 1-diphosphate. The protein operates within purine metabolism; XMP biosynthesis via salvage pathway; XMP from xanthine: step 1/1. Functionally, converts the preformed base xanthine, a product of nucleic acid breakdown, to xanthosine 5'-monophosphate (XMP), so it can be reused for RNA or DNA synthesis. This Bifidobacterium longum (strain NCC 2705) protein is Xanthine phosphoribosyltransferase.